The primary structure comprises 99 residues: Monothiol glutaredoxin-S11 (99 aa).

The region spanning M1–C99 is the Glutaredoxin domain. A [2Fe-2S] cluster-binding site is contributed by C21.

The protein belongs to the glutaredoxin family. CC-type subfamily.

The protein localises to the cytoplasm. In terms of biological role, may only reduce GSH-thiol disulfides, but not protein disulfides. In Arabidopsis thaliana (Mouse-ear cress), this protein is Monothiol glutaredoxin-S11 (GRXS11).